Reading from the N-terminus, the 341-residue chain is Heme A synthase (341 aa).

8 helical membrane-spanning segments follow: residues 7–27, 92–112, 118–138, 159–179, 190–210, 253–273, 280–300, and 302–322; these read VTVW…IGGI, LFGR…AITK, MVAK…MGWF, LFLT…CAGV, FFTA…GALV, FLHR…PFWL, LFLA…VSVV, and IFLA…GVHM. Position 255 (His255) interacts with heme. His308 provides a ligand contact to heme.

Belongs to the COX15/CtaA family. Type 2 subfamily. In terms of assembly, interacts with CtaB. It depends on heme b as a cofactor.

The protein resides in the cell membrane. It catalyses the reaction Fe(II)-heme o + 2 A + H2O = Fe(II)-heme a + 2 AH2. The protein operates within porphyrin-containing compound metabolism; heme A biosynthesis; heme A from heme O: step 1/1. In terms of biological role, catalyzes the conversion of heme O to heme A by two successive hydroxylations of the methyl group at C8. The first hydroxylation forms heme I, the second hydroxylation results in an unstable dihydroxymethyl group, which spontaneously dehydrates, resulting in the formyl group of heme A. This Anaplasma marginale (strain St. Maries) protein is Heme A synthase.